Here is a 274-residue protein sequence, read N- to C-terminus: Short-chain dehydrogenase/reductase bsc3 (274 aa).

The NADP(+) site is built by isoleucine 14, tyrosine 170, lysine 174, isoleucine 203, and threonine 205. Tyrosine 170 functions as the Proton donor in the catalytic mechanism. Catalysis depends on lysine 174, which acts as the Lowers pKa of active site Tyr.

It belongs to the short-chain dehydrogenases/reductases (SDR) family.

It functions in the pathway mycotoxin biosynthesis. Short-chain dehydrogenase/reductase; part of the gene cluster that mediates the biosynthesis of the diterpene glucoside brassicicene C. In the first step of the brassicicene C biosynthesis, the bifunctional diterpene synthase bsc8 that possesses both prenyl transferase and terpene cyclase activity, converts isopentenyl diphosphate and dimethylallyl diphosphate into geranylgeranyl diphosphate (GGDP) that is further converted into fusicocca-2,10(14)-diene, the first precursor for brassicicene C. Fusicocca-2,10(14)-diene is then substrate of cytochrome P450 monooxygenase bsc1 for hydroxylation at the C-8 position. Oxidation at C-16 position to aldehyde is then catalyzed by the cytochrome P450 monooyxygenase bsc7, yielding fusicocca-2,10(14)-diene-8-beta,16-diol. Follows the isomerization of the double bond and reduction of aldehyde to alcohol catalyzed by the short-chain dehydrogenase/reductase bsc3 to yield the diol compound fusicocca-1,10(14)-diene-8 beta,16-diol. The next step is the oxidation at the C-3 position of fusicocca-2,10(14)-diene-8-beta,16-diol catalyzed by the alpha-ketoglutarate dependent dioxygenase bsc9, to produce a triol compound. Methylation of the hydroxy group at position 16 is performed by the methyltransferase bsc6. 16-O-methylation is followed by oxidation at the C-13 position to ketone and an alkyl shift of the methyl group leads to brassicicene C. Although the probable acetyltransferase bsc4 is included in the gene cluster, no acetylation reactions are necessary for brassicicene C biosynthesis. However, the fact that brassicicene E, which is a structurally related compound having an acetoxy group at position 12, was previously isolated from another strain of A.brassicicola suggests that the ATCC 96836 strain might also produce a small amount of brassicicene E. The chain is Short-chain dehydrogenase/reductase bsc3 from Alternaria brassicicola (Dark leaf spot agent).